A 37-amino-acid polypeptide reads, in one-letter code: Large ribosomal subunit protein bL36c (37 aa).

Belongs to the bacterial ribosomal protein bL36 family.

The protein localises to the plastid. It is found in the chloroplast. This chain is Large ribosomal subunit protein bL36c, found in Phaeodactylum tricornutum (strain CCAP 1055/1).